The sequence spans 20 residues: Venom protease (20 aa).

Belongs to the peptidase S1 family. Post-translationally, contains 3 disulfide bonds. In terms of processing, N-glycosylated. In terms of tissue distribution, expressed by the venom duct.

The protein resides in the secreted. The protein is Venom protease of Bombus terrestris (Buff-tailed bumblebee).